The following is a 274-amino-acid chain: Large ribosomal subunit protein uL2 (274 aa).

A disordered region spans residues 224-256; it reads VMNPVDHPHGGGEGKTGEGRHPVDPWGNLTKGY. The segment covering 229 to 246 has biased composition (basic and acidic residues); that stretch reads DHPHGGGEGKTGEGRHPV.

Belongs to the universal ribosomal protein uL2 family. As to quaternary structure, part of the 50S ribosomal subunit. Forms a bridge to the 30S subunit in the 70S ribosome.

One of the primary rRNA binding proteins. Required for association of the 30S and 50S subunits to form the 70S ribosome, for tRNA binding and peptide bond formation. It has been suggested to have peptidyltransferase activity; this is somewhat controversial. Makes several contacts with the 16S rRNA in the 70S ribosome. This chain is Large ribosomal subunit protein uL2, found in Polaromonas sp. (strain JS666 / ATCC BAA-500).